Reading from the N-terminus, the 469-residue chain is UDP-N-acetylmuramate--L-alanine ligase (469 aa).

Glycine 113–threonine 119 provides a ligand contact to ATP.

Belongs to the MurCDEF family.

It is found in the cytoplasm. The catalysed reaction is UDP-N-acetyl-alpha-D-muramate + L-alanine + ATP = UDP-N-acetyl-alpha-D-muramoyl-L-alanine + ADP + phosphate + H(+). It functions in the pathway cell wall biogenesis; peptidoglycan biosynthesis. Cell wall formation. The protein is UDP-N-acetylmuramate--L-alanine ligase of Sorangium cellulosum (strain So ce56) (Polyangium cellulosum (strain So ce56)).